We begin with the raw amino-acid sequence, 61 residues long: Large ribosomal subunit protein uL30 (61 aa).

It belongs to the universal ribosomal protein uL30 family. In terms of assembly, part of the 50S ribosomal subunit.

This chain is Large ribosomal subunit protein uL30, found in Neisseria meningitidis serogroup C (strain 053442).